The primary structure comprises 137 residues: Small ribosomal subunit protein uS12 (137 aa).

The tract at residues 1-23 (MPTINQLVRKGRKSKSSKSDAPA) is disordered. At Asp102 the chain carries 3-methylthioaspartic acid.

Belongs to the universal ribosomal protein uS12 family. In terms of assembly, part of the 30S ribosomal subunit. Contacts proteins S8 and S17. May interact with IF1 in the 30S initiation complex.

In terms of biological role, with S4 and S5 plays an important role in translational accuracy. Its function is as follows. Interacts with and stabilizes bases of the 16S rRNA that are involved in tRNA selection in the A site and with the mRNA backbone. Located at the interface of the 30S and 50S subunits, it traverses the body of the 30S subunit contacting proteins on the other side and probably holding the rRNA structure together. The combined cluster of proteins S8, S12 and S17 appears to hold together the shoulder and platform of the 30S subunit. The polypeptide is Small ribosomal subunit protein uS12 (Levilactobacillus brevis (strain ATCC 367 / BCRC 12310 / CIP 105137 / JCM 1170 / LMG 11437 / NCIMB 947 / NCTC 947) (Lactobacillus brevis)).